Consider the following 441-residue polypeptide: Vacuolar cation/proton exchanger 2 (441 aa).

Residues 1-69 (MSCCKVPVLI…PKNSVLNSIK (69 aa)) lie on the Cytoplasmic side of the membrane. Residues 70-90 (IVIFCNKLNLLLPFGPLAILV) traverse the membrane as a helical segment. The Extracellular portion of the chain corresponds to 91–97 (HYMIDSK). A helical transmembrane segment spans residues 98-118 (GWVFLLTLVGITPLAERLGYA). Over 119–129 (TEQLACYTGPT) the chain is Cytoplasmic. A helical membrane pass occupies residues 130–150 (VGGLLNATFGNVTELIISIFA). The tract at residues 139–174 (GNVTELIISIFALKNGMIRVVQLTLLGSILSNMLLV) is cation selection. The Extracellular portion of the chain corresponds to 151–166 (LKNGMIRVVQLTLLGS). The helical transmembrane segment at 167–187 (ILSNMLLVLGCAFFCGGLVFY) threads the bilayer. Residues 188 to 196 (QKDQVFDKG) lie on the Cytoplasmic side of the membrane. Residues 197–217 (IATVNSGLLLMAVMGILFPAV) traverse the membrane as a helical segment. Topologically, residues 218–231 (LHYTHSEVHAGSSE) are extracellular. The chain crosses the membrane as a helical span at residues 232 to 252 (LALSRFSSCIMLIAYAAYLFF). Topologically, residues 253–286 (QLKSQSNSYSPLDEESNQNEETSAEDEDPEISKW) are cytoplasmic. The helical transmembrane segment at 287–307 (EAIIWLSILTAWVSLLSGYLV) threads the bilayer. At 308-311 (DAIE) the chain is on the extracellular side. Residues 312–332 (GASVSWNIPIAFISTILLPIV) traverse the membrane as a helical segment. The Cytoplasmic segment spans residues 333–354 (GNAAEHAGAIMFAMKDKLDLSL). Residues 333–368 (GNAAEHAGAIMFAMKDKLDLSLGVAIGSSIQISMFA) are cation selection. The helical transmembrane segment at 355–375 (GVAIGSSIQISMFAVPFCVVI) threads the bilayer. The Extracellular segment spans residues 376-384 (GWMMGQQMD). Residues 385–405 (LNFQLFETAMLFITVIVVAFF) traverse the membrane as a helical segment. The Cytoplasmic segment spans residues 406-412 (LQEGSSN). The helical transmembrane segment at 413–433 (YFKGLMLILCYLIVAASFFVH) threads the bilayer. At 434–441 (EDPHQDGI) the chain is on the extracellular side.

It belongs to the Ca(2+):cation antiporter (CaCA) (TC 2.A.19) family. Cation/proton exchanger (CAX) subfamily.

It localises to the vacuole membrane. Its activity is regulated as follows. Inhibited by excess of Ca(2+) and Cd(2+), Mn(2+), and Zn(2+). Its function is as follows. Vacuolar cation/proton exchanger (CAX). Translocates Ca(2+) and other metal ions into vacuoles using the proton gradient formed by H(+)-ATPase and H(+)-pyrophosphatase. The sequence is that of Vacuolar cation/proton exchanger 2 (CAX2) from Arabidopsis thaliana (Mouse-ear cress).